The chain runs to 243 residues: Carboxy-S-adenosyl-L-methionine synthase (243 aa).

Residues Y39, 64-66, 89-90, 117-118, N132, and R199 each bind S-adenosyl-L-methionine; these read GCS, DN, and DL.

The protein belongs to the class I-like SAM-binding methyltransferase superfamily. Cx-SAM synthase family. In terms of assembly, homodimer.

The catalysed reaction is prephenate + S-adenosyl-L-methionine = carboxy-S-adenosyl-L-methionine + 3-phenylpyruvate + H2O. Its function is as follows. Catalyzes the conversion of S-adenosyl-L-methionine (SAM) to carboxy-S-adenosyl-L-methionine (Cx-SAM). This chain is Carboxy-S-adenosyl-L-methionine synthase, found in Pseudoalteromonas atlantica (strain T6c / ATCC BAA-1087).